Reading from the N-terminus, the 640-residue chain is Threonine--tRNA ligase (640 aa).

A catalytic region spans residues 224–525 (DHRKLGKELD…LTEHYAGAFP (302 aa)). Zn(2+)-binding residues include Cys323, His374, and His502.

This sequence belongs to the class-II aminoacyl-tRNA synthetase family. Homodimer. Zn(2+) is required as a cofactor.

It localises to the cytoplasm. It catalyses the reaction tRNA(Thr) + L-threonine + ATP = L-threonyl-tRNA(Thr) + AMP + diphosphate + H(+). In terms of biological role, catalyzes the attachment of threonine to tRNA(Thr) in a two-step reaction: L-threonine is first activated by ATP to form Thr-AMP and then transferred to the acceptor end of tRNA(Thr). Also edits incorrectly charged L-seryl-tRNA(Thr). The polypeptide is Threonine--tRNA ligase (Tropheryma whipplei (strain Twist) (Whipple's bacillus)).